A 98-amino-acid polypeptide reads, in one-letter code: U-megalopygitoxin(1)-Mo1 (98 aa).

An N-terminal signal peptide occupies residues 1 to 17; that stretch reads MYRETFVFCVLLAVVSA.

This sequence belongs to the caterpillar 1 family. Contains 4 disulfide bonds. Expressed by the venom apparatus.

The protein resides in the secreted. Functionally, probable toxin. This Megalopyge opercularis (Southern flannel moth) protein is U-megalopygitoxin(1)-Mo1.